The primary structure comprises 111 residues: MSDTLNQLAEVLEARKNATPDSSYVASLYHKGLNKILEKVGEESVETILAAKDAAASGDCSELIHETADLWFHSLVMLAALGQHPQAVLDELDRRFGLSGHAEKAARQPSA.

This sequence belongs to the PRA-PH family.

It is found in the cytoplasm. It carries out the reaction 1-(5-phospho-beta-D-ribosyl)-ATP + H2O = 1-(5-phospho-beta-D-ribosyl)-5'-AMP + diphosphate + H(+). Its pathway is amino-acid biosynthesis; L-histidine biosynthesis; L-histidine from 5-phospho-alpha-D-ribose 1-diphosphate: step 2/9. The protein is Phosphoribosyl-ATP pyrophosphatase of Azotobacter vinelandii (strain DJ / ATCC BAA-1303).